The chain runs to 426 residues: MIDVKLLRKNPEIFYDAIKKRNMDTEIIDKILEVDKEWRELVAKVNELKAKRNEFSKLVAKAKVEKDNEKASKLIEESKKIGEEIKKIEEQEKKLEEEMQNLALNIPNIPAEDVPFGKDESENIEIRRWGEPRKFDFEPKAHWDLGPELSMMDFERGAKLSGSRFTVLYSYLARLERALIQFMLDVHTKEHGYTEVWVPQLVKRDAMLWTGKLPKFEEDAYCIEKDDMFLIPTAEVPLVALHAQEILSEKDLPIKYTAYSACYRREAGSYGKDVRGMIRQHQFDKVELVWITTPERSFEDLERLTQDAERILQLLELPYRVVSLCSGDLGFVSAKTYDIEVWLPSYNSYKEISSCSNTTDFQTRRSNIRYRGSDNKLHYAHALNGSGLAVGRTLVAIVENYQNEDGSITVPKVLVPYMGVEKIEVK.

233-235 contacts L-serine; that stretch reads TAE. 264–266 lines the ATP pocket; that stretch reads RRE. L-serine is bound at residue glutamate 287. An ATP-binding site is contributed by 351–354; that stretch reads EISS. An L-serine-binding site is contributed by serine 386.

It belongs to the class-II aminoacyl-tRNA synthetase family. Type-1 seryl-tRNA synthetase subfamily. As to quaternary structure, homodimer. The tRNA molecule binds across the dimer.

It localises to the cytoplasm. It catalyses the reaction tRNA(Ser) + L-serine + ATP = L-seryl-tRNA(Ser) + AMP + diphosphate + H(+). It carries out the reaction tRNA(Sec) + L-serine + ATP = L-seryl-tRNA(Sec) + AMP + diphosphate + H(+). The protein operates within aminoacyl-tRNA biosynthesis; selenocysteinyl-tRNA(Sec) biosynthesis; L-seryl-tRNA(Sec) from L-serine and tRNA(Sec): step 1/1. In terms of biological role, catalyzes the attachment of serine to tRNA(Ser). Is also able to aminoacylate tRNA(Sec) with serine, to form the misacylated tRNA L-seryl-tRNA(Sec), which will be further converted into selenocysteinyl-tRNA(Sec). This is Serine--tRNA ligase from Thermosipho africanus (strain TCF52B).